A 409-amino-acid polypeptide reads, in one-letter code: MSKGRTDYGNGAVKYVIRAKLRANGYVERPDVVGAIFGQTEGLLGDDLDLRRLLKTGRIGRIDVKLRNENGKTVGEIIVPSSLDRVETALVAAALEQVDRIGPCRAEVEVVSIDDIRKEKRERMIRRAREILREMVSEVTPDSSELVQKVKEAVEDVEVEEYKGLPAGPNVEDSDAIIVVEGRADVANLLRCGIKNVIAVEGTNVPEAIVELSKEKTVTAFVDGDRGGELILKELLQVADVDYVAKAPKGKEVEELTRKEIKRALERKVPVEEYLKEIGERPKDKEREKGKKPKPKKRPERRGRPRKKKARPKRGPQERRLLDRLKRLKGTFRAEFLDEGLKPVKEVELDELVEKLKSEDGVRAVVLDGVITRRLVEAAREKGVKYVVGVKEGDLDPEIKKDVKIITMS.

In terms of domain architecture, Toprim spans Asp175–Ile261. Mg(2+)-binding residues include Glu181, Asp223, and Asp225. Residues Glu280–Lys289 show a composition bias toward basic and acidic residues. The interval Glu280–Leu322 is disordered. Residues Gly290–Arg314 show a composition bias toward basic residues.

The protein belongs to the archaeal DnaG primase family. As to quaternary structure, forms a ternary complex with MCM helicase and DNA. Component of the archaeal exosome complex. Mg(2+) is required as a cofactor.

It catalyses the reaction ssDNA + n NTP = ssDNA/pppN(pN)n-1 hybrid + (n-1) diphosphate.. Functionally, RNA polymerase that catalyzes the synthesis of short RNA molecules used as primers for DNA polymerase during DNA replication. Also part of the exosome, which is a complex involved in RNA degradation. Acts as a poly(A)-binding protein that enhances the interaction between heteromeric, adenine-rich transcripts and the exosome. This Methanopyrus kandleri (strain AV19 / DSM 6324 / JCM 9639 / NBRC 100938) protein is DNA primase DnaG.